A 282-amino-acid polypeptide reads, in one-letter code: Ribosomal RNA small subunit methyltransferase A (282 aa).

Residues Asn28, Leu30, Gly55, Glu77, Asp103, and Asn122 each contribute to the S-adenosyl-L-methionine site.

Belongs to the class I-like SAM-binding methyltransferase superfamily. rRNA adenine N(6)-methyltransferase family. RsmA subfamily.

It localises to the cytoplasm. It carries out the reaction adenosine(1518)/adenosine(1519) in 16S rRNA + 4 S-adenosyl-L-methionine = N(6)-dimethyladenosine(1518)/N(6)-dimethyladenosine(1519) in 16S rRNA + 4 S-adenosyl-L-homocysteine + 4 H(+). Functionally, specifically dimethylates two adjacent adenosines (A1518 and A1519) in the loop of a conserved hairpin near the 3'-end of 16S rRNA in the 30S particle. May play a critical role in biogenesis of 30S subunits. The sequence is that of Ribosomal RNA small subunit methyltransferase A from Paracoccus denitrificans (strain Pd 1222).